The chain runs to 511 residues: 2-isopropylmalate synthase (511 aa).

In terms of domain architecture, Pyruvate carboxyltransferase spans 5-267 (IQIFDTTLRD…ESQINLEETK (263 aa)). Residues D14, H202, H204, and N238 each coordinate Mn(2+). The regulatory domain stretch occupies residues 391 to 511 (QLDNLQLQYV…EYELKEGIRT (121 aa)).

Belongs to the alpha-IPM synthase/homocitrate synthase family. LeuA type 1 subfamily. In terms of assembly, homodimer. Mn(2+) is required as a cofactor.

It localises to the cytoplasm. The enzyme catalyses 3-methyl-2-oxobutanoate + acetyl-CoA + H2O = (2S)-2-isopropylmalate + CoA + H(+). It functions in the pathway amino-acid biosynthesis; L-leucine biosynthesis; L-leucine from 3-methyl-2-oxobutanoate: step 1/4. In terms of biological role, catalyzes the condensation of the acetyl group of acetyl-CoA with 3-methyl-2-oxobutanoate (2-ketoisovalerate) to form 3-carboxy-3-hydroxy-4-methylpentanoate (2-isopropylmalate). This is 2-isopropylmalate synthase from Staphylococcus epidermidis (strain ATCC 35984 / DSM 28319 / BCRC 17069 / CCUG 31568 / BM 3577 / RP62A).